The sequence spans 585 residues: Aspartate--tRNA(Asp/Asn) ligase (585 aa).

Glu-173 contacts L-aspartate. The interval 197–200 is aspartate; the sequence is QLFK. L-aspartate is bound at residue Arg-219. ATP contacts are provided by residues 219-221 and Gln-228; that span reads RDE. His-447 provides a ligand contact to L-aspartate. Residue Glu-477 coordinates ATP. Arg-484 lines the L-aspartate pocket. 529-532 is a binding site for ATP; sequence GFDR.

It belongs to the class-II aminoacyl-tRNA synthetase family. Type 1 subfamily. Homodimer.

Its subcellular location is the cytoplasm. The enzyme catalyses tRNA(Asx) + L-aspartate + ATP = L-aspartyl-tRNA(Asx) + AMP + diphosphate. Functionally, aspartyl-tRNA synthetase with relaxed tRNA specificity since it is able to aspartylate not only its cognate tRNA(Asp) but also tRNA(Asn). Reaction proceeds in two steps: L-aspartate is first activated by ATP to form Asp-AMP and then transferred to the acceptor end of tRNA(Asp/Asn). The sequence is that of Aspartate--tRNA(Asp/Asn) ligase from Campylobacter concisus (strain 13826).